Consider the following 202-residue polypeptide: uncharacterized protein (202 aa).

Its subcellular location is the mitochondrion. This is an uncharacterized protein from Schizosaccharomyces pombe (strain 972 / ATCC 24843) (Fission yeast).